The sequence spans 321 residues: Thioredoxin reductase (321 aa).

FAD is bound by residues 11–14 (SGPA), 40–41 (TA), Gln45, Asn54, Cys145, Asp288, and 295–297 (RQA). A disulfide bond links Cys142 and Cys145.

Belongs to the class-II pyridine nucleotide-disulfide oxidoreductase family. As to quaternary structure, homodimer. FAD is required as a cofactor.

It localises to the cytoplasm. It catalyses the reaction [thioredoxin]-dithiol + NADP(+) = [thioredoxin]-disulfide + NADPH + H(+). In Debaryomyces hansenii (strain ATCC 36239 / CBS 767 / BCRC 21394 / JCM 1990 / NBRC 0083 / IGC 2968) (Yeast), this protein is Thioredoxin reductase (TRR1).